The primary structure comprises 348 residues: MDLAANEISIYDKLSETVDLVRQTGHQCGMSEKAIEKFIRQLLEKNEPQRGPPQYPLLIAMYKVLLTLGLILFTAYFVIQPFSSLAPEPVLSGAHTWRSLIHHIRLVSLPITKKYMPENKGVPLQGREEDKPFPDFDPWSSNNCEQNESEPIPANCTVCAQILPLKVTLPEDTPKNFERLRPLVIKTGQPLLSAEIQSFSCQYPEVTEGFTEGVLTKWWRCFPERWFPFPYPWRRPLNRSQILRELFPVFTQLPFPKDASLNKCFLIQPEPVVGSKMHEVHDLFTIGSGEAMLQLIPPFQCRRHCQSVAMPIESGDIGYAGAAHWKVYIVARGVQPLVICDGTTLSEL.

Over 1–58 (MDLAANEISIYDKLSETVDLVRQTGHQCGMSEKAIEKFIRQLLEKNEPQRGPPQYPLL) the chain is Cytoplasmic. The chain crosses the membrane as a helical span at residues 59-79 (IAMYKVLLTLGLILFTAYFVI). Residues 80-348 (QPFSSLAPEP…ICDGTTLSEL (269 aa)) lie on the Extracellular side of the membrane.

As to quaternary structure, homodimer. Interacts with BRS3. Interacts (via N-terminus) with SIN3B. Glycosylated.

The protein localises to the golgi apparatus membrane. It is found in the cytoplasm. Exhibits histone deacetylase (HDAC) enhancer properties. May play a role in cell cycle progression and wound repair of bronchial epithelial cells. The protein is Bombesin receptor-activated protein C6orf89 homolog of Rattus norvegicus (Rat).